A 338-amino-acid polypeptide reads, in one-letter code: Anthranilate phosphoribosyltransferase (338 aa).

5-phospho-alpha-D-ribose 1-diphosphate-binding positions include G81, 84–85 (GD), T89, 91–94 (NIST), 109–117 (KHGNRALSS), and A121. An anthranilate-binding site is contributed by G81. S93 is a Mg(2+) binding site. Anthranilate is bound at residue N112. Position 167 (R167) interacts with anthranilate. The Mg(2+) site is built by D225 and E226.

Belongs to the anthranilate phosphoribosyltransferase family. As to quaternary structure, homodimer. Mg(2+) serves as cofactor.

It catalyses the reaction N-(5-phospho-beta-D-ribosyl)anthranilate + diphosphate = 5-phospho-alpha-D-ribose 1-diphosphate + anthranilate. The protein operates within amino-acid biosynthesis; L-tryptophan biosynthesis; L-tryptophan from chorismate: step 2/5. Functionally, catalyzes the transfer of the phosphoribosyl group of 5-phosphorylribose-1-pyrophosphate (PRPP) to anthranilate to yield N-(5'-phosphoribosyl)-anthranilate (PRA). This chain is Anthranilate phosphoribosyltransferase, found in Rhizobium etli (strain CIAT 652).